The following is a 412-amino-acid chain: MIEEEILKIIKPTEEDKKGIEKVLEIIRERLNKLDFEVEGSFRKGTWLRQDTDIDVFVFYPKDVGKEYLERNALNDIINRIKDLDYTLAYAEHPYVIVNINNVEVDIVPALRVESGDKAITAVDRTPFHTKYVTSHLDERGKDEVRLLKRFMKGIGVYGAELKVQGFSGYATELLIIYYGNFRKVLEEASKWKHPIKIELTKPMKIFSEPLIIPDPVDPKRNVTAAVSLKNIATFSIAAKYYLKNPSIEFFFPSKKVEEKVKGDVLILRLNLDEKSSEDIVWGQIKRSVNKIERALKQYGFRVIDVQAWGDTNNITIAVQLESKNIGQYYLNIGPQYYSETIEDFIQKNDNIWVGEDGRLYSIKERKEYDAETIAKKNIVLKVKYNIESYWLQNKEDQQIMKFLRKTPTWLK.

ATP-binding residues include S41 and K44. CTP contacts are provided by S41 and K44. Mg(2+) is bound by residues D53, D55, and D106. Residues H129, K149, and Y158 each coordinate ATP. CTP-binding residues include H129, K149, and Y158.

This sequence belongs to the tRNA nucleotidyltransferase/poly(A) polymerase family. Archaeal CCA-adding enzyme subfamily. In terms of assembly, homodimer. Requires Mg(2+) as cofactor.

The enzyme catalyses a tRNA precursor + 2 CTP + ATP = a tRNA with a 3' CCA end + 3 diphosphate. It carries out the reaction a tRNA with a 3' CCA end + 2 CTP + ATP = a tRNA with a 3' CCACCA end + 3 diphosphate. Functionally, catalyzes the addition and repair of the essential 3'-terminal CCA sequence in tRNAs without using a nucleic acid template. Adds these three nucleotides in the order of C, C, and A to the tRNA nucleotide-73, using CTP and ATP as substrates and producing inorganic pyrophosphate. tRNA 3'-terminal CCA addition is required both for tRNA processing and repair. Also involved in tRNA surveillance by mediating tandem CCA addition to generate a CCACCA at the 3' terminus of unstable tRNAs. While stable tRNAs receive only 3'-terminal CCA, unstable tRNAs are marked with CCACCA and rapidly degraded. The polypeptide is CCA-adding enzyme (Saccharolobus islandicus (strain Y.G.57.14 / Yellowstone #1) (Sulfolobus islandicus)).